Consider the following 306-residue polypeptide: uncharacterized protein (306 aa).

10 helical membrane-spanning segments follow: residues 6-26 (LLGFTFALITAMAWGSLPIAL), 35-55 (AQTIVWYRFIIAAVSLLALLA), 69-89 (YAWIMLIGVIGLTSNFLLFSS), 98-118 (VAQIFIHLSSFGMLICGVLIF), 122-142 (LGLHQKIGLFLLLIGLGLFFN), 154-174 (YSTGVILGVGGALIWVAYGMA), 186-206 (QILLMMYLGCAIAFMPMADFS), 211-231 (LTPLALICFIYCCLNTLIGYG), 247-267 (VVITLVPLFTILFSHIAHYFS), and 281-301 (YIGAFVVVCGAILSAIGHKLL). EamA domains lie at 17 to 142 (MAWG…LFFN) and 166 to 296 (LIWV…LSAI).

The protein belongs to the EamA transporter family.

The protein localises to the cell membrane. This is an uncharacterized protein from Haemophilus influenzae (strain ATCC 51907 / DSM 11121 / KW20 / Rd).